Consider the following 613-residue polypeptide: Acetylcholinesterase (613 aa).

An N-terminal signal peptide occupies residues 1–30 (MRPPWCPLHTPSLTPPLLLLLFLIGGGAEA). N-linked (GlcNAc...) asparagine glycosylation is present at asparagine 91. The cysteines at positions 99 and 126 are disulfide-linked. Serine 233 (acyl-ester intermediate) is an active-site residue. A disulfide bond links cysteine 287 and cysteine 302. A glycan (N-linked (GlcNAc...) asparagine) is linked at asparagine 295. Glutamate 364 acts as the Charge relay system in catalysis. Asparagine 380 carries N-linked (GlcNAc...) asparagine glycosylation. Cysteine 439 and cysteine 559 are joined by a disulfide. Histidine 477 acts as the Charge relay system in catalysis. Asparagine 494 carries an N-linked (GlcNAc...) asparagine glycan.

This sequence belongs to the type-B carboxylesterase/lipase family. As to quaternary structure, interacts with PRIMA1. The interaction with PRIMA1 is required to anchor it to the basal lamina of cells and organize into tetramers. Isoform H generates GPI-anchored dimers; disulfide linked. Isoform T generates multiple structures, ranging from monomers and dimers to collagen-tailed and hydrophobic-tailed forms, in which catalytic tetramers are associated with anchoring proteins that attach them to the basal lamina or to cell membranes. In the collagen-tailed forms, isoform T subunits are associated with a specific collagen, COLQ, which triggers the formation of isoform T tetramers, from monomers and dimers.

It localises to the synapse. It is found in the secreted. The protein localises to the cell membrane. It carries out the reaction acetylcholine + H2O = choline + acetate + H(+). Functionally, terminates signal transduction at the neuromuscular junction by rapid hydrolysis of the acetylcholine released into the synaptic cleft. The protein is Acetylcholinesterase (ACHE) of Bos taurus (Bovine).